The following is a 291-amino-acid chain: DNA repair protein RecO (291 aa).

It belongs to the RecO family.

Involved in DNA repair and RecF pathway recombination. The chain is DNA repair protein RecO from Cupriavidus pinatubonensis (strain JMP 134 / LMG 1197) (Cupriavidus necator (strain JMP 134)).